We begin with the raw amino-acid sequence, 81 residues long: Photosystem I iron-sulfur center (81 aa).

4Fe-4S ferredoxin-type domains are found at residues 2 to 31 (SHSV…MIPW) and 39 to 68 (IASA…VRVY). 8 residues coordinate [4Fe-4S] cluster: cysteine 11, cysteine 14, cysteine 17, cysteine 21, cysteine 48, cysteine 51, cysteine 54, and cysteine 58.

In terms of assembly, the eukaryotic PSI reaction center is composed of at least 11 subunits. The cofactor is [4Fe-4S] cluster.

Its subcellular location is the plastid. It is found in the chloroplast thylakoid membrane. It carries out the reaction reduced [plastocyanin] + hnu + oxidized [2Fe-2S]-[ferredoxin] = oxidized [plastocyanin] + reduced [2Fe-2S]-[ferredoxin]. Apoprotein for the two 4Fe-4S centers FA and FB of photosystem I (PSI); essential for photochemical activity. FB is the terminal electron acceptor of PSI, donating electrons to ferredoxin. The C-terminus interacts with PsaA/B/D and helps assemble the protein into the PSI complex. Required for binding of PsaD and PsaE to PSI. PSI is a plastocyanin-ferredoxin oxidoreductase, converting photonic excitation into a charge separation, which transfers an electron from the donor P700 chlorophyll pair to the spectroscopically characterized acceptors A0, A1, FX, FA and FB in turn. This is Photosystem I iron-sulfur center from Arabis hirsuta (Hairy rock-cress).